Here is a 498-residue protein sequence, read N- to C-terminus: ATP synthase subunit beta, chloroplastic (498 aa).

Residue 172–179 coordinates ATP; that stretch reads GGAGVGKT.

This sequence belongs to the ATPase alpha/beta chains family. In terms of assembly, F-type ATPases have 2 components, CF(1) - the catalytic core - and CF(0) - the membrane proton channel. CF(1) has five subunits: alpha(3), beta(3), gamma(1), delta(1), epsilon(1). CF(0) has four main subunits: a(1), b(1), b'(1) and c(9-12).

It is found in the plastid. Its subcellular location is the chloroplast thylakoid membrane. The catalysed reaction is ATP + H2O + 4 H(+)(in) = ADP + phosphate + 5 H(+)(out). Its function is as follows. Produces ATP from ADP in the presence of a proton gradient across the membrane. The catalytic sites are hosted primarily by the beta subunits. This chain is ATP synthase subunit beta, chloroplastic, found in Phalaenopsis aphrodite subsp. formosana (Moth orchid).